Reading from the N-terminus, the 187-residue chain is Inner membrane-spanning protein YciB (187 aa).

5 helical membrane-spanning segments follow: residues 22-42 (IYVA…VTYA), 50-70 (MQLI…FFHD), 80-100 (IIYV…KSVV), 118-138 (INWA…YIAY), and 148-168 (FKVF…GVYI).

The protein belongs to the YciB family.

It is found in the cell inner membrane. Functionally, plays a role in cell envelope biogenesis, maintenance of cell envelope integrity and membrane homeostasis. This chain is Inner membrane-spanning protein YciB, found in Vibrio parahaemolyticus serotype O3:K6 (strain RIMD 2210633).